Reading from the N-terminus, the 243-residue chain is MKMHIARDSIVFLLNKHLQNTILTNKIEQECFLQADTPKKYLQYIKPFLINCMTKNITTDLVMKDSKRLEPYIILEMRDIIQMMFFRTLQKHMFFKEHTDLCTEYAQKIEASCYHYTYQQQEKTFLEEYSTRCGTINHIINCEKKSHQQQDNDALNKLISGELKPEAIGSMTFAELCPSAALKEKTEITLRSQQKVAEKTSQLYKCPNCKQRMCTYREVQTRALDEPSTIFCTCKKCGHEFIG.

Residues 77–201 (MRDIIQMMFF…SQQKVAEKTS (125 aa)) form the TFIIS central domain. The segment at 202-242 (QLYKCPNCKQRMCTYREVQTRALDEPSTIFCTCKKCGHEFI) adopts a TFIIS-type zinc-finger fold. Residues Cys206, Cys209, Cys234, and Cys237 each coordinate Zn(2+).

The protein belongs to the TFS-II family.

Functionally, putative initiation factor. Necessary for efficient transcription elongation past template-encoded arresting sites. The chain is Transcription factor TFIIS homolog from Ornithodoros (relapsing fever ticks).